The chain runs to 525 residues: Signal recognition particle protein (525 aa).

Residues Gly-107–Thr-114, Asp-196–Arg-200, and Thr-254–Asp-257 each bind GTP. Residues Gly-437–Lys-525 form a disordered region. Positions Ser-447 to Thr-467 are enriched in basic residues. Residues Gly-480 to Leu-497 are compositionally biased toward low complexity.

Belongs to the GTP-binding SRP family. SRP54 subfamily. As to quaternary structure, part of the signal recognition particle protein translocation system, which is composed of SRP and FtsY.

The protein resides in the cytoplasm. It carries out the reaction GTP + H2O = GDP + phosphate + H(+). Its function is as follows. Involved in targeting and insertion of nascent membrane proteins into the cytoplasmic membrane. Binds to the hydrophobic signal sequence of the ribosome-nascent chain (RNC) as it emerges from the ribosomes. The SRP-RNC complex is then targeted to the cytoplasmic membrane where it interacts with the SRP receptor FtsY. The polypeptide is Signal recognition particle protein (Mycobacterium bovis (strain ATCC BAA-935 / AF2122/97)).